Reading from the N-terminus, the 214-residue chain is Adenylate kinase (214 aa).

ATP is bound at residue Gly10–Thr15. Positions Ser30–Val59 are NMP. AMP is bound by residues Thr31, Arg36, Gln57–Val59, Gly85–Arg88, and Gln92. The segment at Gly122 to Asp159 is LID. Residues Arg123 and Val132 to Tyr133 contribute to the ATP site. AMP is bound by residues Arg156 and Arg167. Gln200 contacts ATP.

It belongs to the adenylate kinase family. Monomer.

It localises to the cytoplasm. It catalyses the reaction AMP + ATP = 2 ADP. Its pathway is purine metabolism; AMP biosynthesis via salvage pathway; AMP from ADP: step 1/1. Its function is as follows. Catalyzes the reversible transfer of the terminal phosphate group between ATP and AMP. Plays an important role in cellular energy homeostasis and in adenine nucleotide metabolism. The protein is Adenylate kinase of Shewanella halifaxensis (strain HAW-EB4).